A 227-amino-acid chain; its full sequence is Type II restriction enzyme ScaI (227 aa).

Residues 12–35 (EARVGTRTGGPAMRPKTSDSPYFG) are disordered.

The catalysed reaction is Endonucleolytic cleavage of DNA to give specific double-stranded fragments with terminal 5'-phosphates.. In terms of biological role, a P subtype restriction enzyme that recognizes the double-stranded sequence 5'-AGTACT-3' and cleaves after T-3. The polypeptide is Type II restriction enzyme ScaI (Streptomyces caespitosus).